A 360-amino-acid polypeptide reads, in one-letter code: MVATLERREEKRDWGTFATWITSTENRLYIGWFGCLMIPTLLTAASCYIIAFIAAPPVDIDGIREPVAGSLLYGNNIISGAVIPSSNAIGIHFYPIWEAASIEEWLYNGGPYQLIVFHFLIGVACWMGREWELSYRLGMRPWIFVAFSAPVAAASAVFLVYPIGQGSFSDGMPLGISGTFNFMIVFQAEHNILMRPFHMAGVAGVFGGSLFSAMHGSLVTSSLIRETSEVESVNYGYKFGQEEETYNIVAAHGYFGRLIFQYASFNNSRALHFFLAAWPVVGIWLTALGVSTMAFNLNGFNFNQSVVDSEGRVINTWADIINRADLGMEVMHERNAHNFPLDLASNEILPVAISAPSVVG.

3 consecutive transmembrane segments (helical) span residues 29–46 (YIGWFGCLMIPTLLTAAS), 118–133 (HFLIGVACWMGREWEL), and 142–156 (WIFVAFSAPVAAASA). His118 lines the chlorophyll a pocket. Trp126 is a pheophytin a binding site. Residues Asp170 and Glu189 each coordinate [CaMn4O5] cluster. Residues 197–218 (FHMAGVAGVFGGSLFSAMHGSL) traverse the membrane as a helical segment. His198 serves as a coordination point for chlorophyll a. A quinone-binding positions include His215 and 264-265 (SF). His215 is a Fe cation binding site. His272 lines the Fe cation pocket. Residues 274–288 (FLAAWPVVGIWLTAL) traverse the membrane as a helical segment. Positions 332, 333, 342, and 344 each coordinate [CaMn4O5] cluster. Positions 345–360 (SNEILPVAISAPSVVG) are excised as a propeptide.

The protein belongs to the reaction center PufL/M/PsbA/D family. In terms of assembly, PSII is composed of 1 copy each of membrane proteins PsbA, PsbB, PsbC, PsbD, PsbE, PsbF, PsbH, PsbI, PsbJ, PsbK, PsbL, PsbM, PsbT, PsbX, PsbY, PsbZ, Psb30/Ycf12, at least 3 peripheral proteins of the oxygen-evolving complex and a large number of cofactors. It forms dimeric complexes. Requires The D1/D2 heterodimer binds P680, chlorophylls that are the primary electron donor of PSII, and subsequent electron acceptors. It shares a non-heme iron and each subunit binds pheophytin, quinone, additional chlorophylls, carotenoids and lipids. D1 provides most of the ligands for the Mn4-Ca-O5 cluster of the oxygen-evolving complex (OEC). There is also a Cl(-1) ion associated with D1 and D2, which is required for oxygen evolution. The PSII complex binds additional chlorophylls, carotenoids and specific lipids. as cofactor. Post-translationally, tyr-161 forms a radical intermediate that is referred to as redox-active TyrZ, YZ or Y-Z. C-terminally processed by CTPA; processing is essential to allow assembly of the oxygen-evolving complex and thus photosynthetic growth.

It is found in the plastid. Its subcellular location is the chloroplast thylakoid membrane. It carries out the reaction 2 a plastoquinone + 4 hnu + 2 H2O = 2 a plastoquinol + O2. Its function is as follows. Photosystem II (PSII) is a light-driven water:plastoquinone oxidoreductase that uses light energy to abstract electrons from H(2)O, generating O(2) and a proton gradient subsequently used for ATP formation. It consists of a core antenna complex that captures photons, and an electron transfer chain that converts photonic excitation into a charge separation. The D1/D2 (PsbA/PsbD) reaction center heterodimer binds P680, the primary electron donor of PSII as well as several subsequent electron acceptors. In Ectocarpus siliculosus (Brown alga), this protein is Photosystem II protein D1.